A 300-amino-acid polypeptide reads, in one-letter code: GTPase Era (300 aa).

The 169-residue stretch at 8–176 (RCGYVAIVGR…EAQIAKHLPE (169 aa)) folds into the Era-type G domain. The segment at 16-23 (GRPNVGKS) is G1. 16–23 (GRPNVGKS) provides a ligand contact to GTP. Residues 42–46 (QTTRH) are G2. Residues 63–66 (DTPG) are G3. Residues 63-67 (DTPGM) and 125-128 (NKTD) each bind GTP. The G4 stretch occupies residues 125-128 (NKTD). A G5 region spans residues 155-157 (ISA). Positions 199–283 (VREKIMRQLG…MLNLWVKVKG (85 aa)) constitute a KH type-2 domain.

Belongs to the TRAFAC class TrmE-Era-EngA-EngB-Septin-like GTPase superfamily. Era GTPase family. In terms of assembly, monomer.

It is found in the cytoplasm. The protein resides in the cell inner membrane. In terms of biological role, an essential GTPase that binds both GDP and GTP, with rapid nucleotide exchange. Plays a role in 16S rRNA processing and 30S ribosomal subunit biogenesis and possibly also in cell cycle regulation and energy metabolism. The polypeptide is GTPase Era (Pseudomonas entomophila (strain L48)).